A 202-amino-acid chain; its full sequence is N-(5'-phosphoribosyl)anthranilate isomerase (202 aa).

It belongs to the TrpF family.

It catalyses the reaction N-(5-phospho-beta-D-ribosyl)anthranilate = 1-(2-carboxyphenylamino)-1-deoxy-D-ribulose 5-phosphate. Its pathway is amino-acid biosynthesis; L-tryptophan biosynthesis; L-tryptophan from chorismate: step 3/5. The polypeptide is N-(5'-phosphoribosyl)anthranilate isomerase (Bacillus cereus (strain ATCC 14579 / DSM 31 / CCUG 7414 / JCM 2152 / NBRC 15305 / NCIMB 9373 / NCTC 2599 / NRRL B-3711)).